Reading from the N-terminus, the 360-residue chain is MTTIRQQRSSLLKGWPQFCEWVTSTDNRIYVGWFGVLMIPCLLAAAICFVVAFIAAPPVDIDGIREPVAGSFLYGNNIISGAVVPSSNAIGLHFYPIWEAATLDEWLYNGGPYQLVIFHFLIGICGWMGRQWELSYRLGMRPWICVAYSAPVSAAFAVFLVYPFGQGSFSDGMPLGISGTFNFMFVFQAEHNILMHPFHMAGVAGMFGGSLFSAMHGSLVTSSLIRETTETESQNYGYKFGQEEETYNIVAAHGYFGRLIFQYASFNNSRSLHFFLAIFPVVCVWLTSMGICTMAFNLNGFNFNQSVVDANGKVVPTWGDVLNRANLGMEVMHERNAHNFPLDLAAAESTSVALVAPSIG.

3 helical membrane passes run 30-47, 119-134, and 143-157; these read YVGWFGVLMIPCLLAAAI, HFLIGICGWMGRQWEL, and WICVAYSAPVSAAFA. Histidine 119 provides a ligand contact to chlorophyll a. Pheophytin a is bound at residue tryptophan 127. 2 residues coordinate [CaMn4O5] cluster: aspartate 171 and glutamate 190. A helical transmembrane segment spans residues 198 to 219; that stretch reads FHMAGVAGMFGGSLFSAMHGSL. Position 199 (histidine 199) interacts with chlorophyll a. Residues histidine 216 and 265-266 each bind a quinone; that span reads SF. Histidine 216 serves as a coordination point for Fe cation. Position 273 (histidine 273) interacts with Fe cation. Residues 275–289 form a helical membrane-spanning segment; it reads FLAIFPVVCVWLTSM. [CaMn4O5] cluster is bound by residues histidine 333, glutamate 334, aspartate 343, and alanine 345. The propeptide occupies 346–360; it reads AAESTSVALVAPSIG.

The protein belongs to the reaction center PufL/M/PsbA/D family. As to quaternary structure, PSII is composed of 1 copy each of membrane proteins PsbA, PsbB, PsbC, PsbD, PsbE, PsbF, PsbH, PsbI, PsbJ, PsbK, PsbL, PsbM, PsbT, PsbX, PsbY, Psb30/Ycf12, peripheral proteins PsbO, CyanoQ (PsbQ), PsbU, PsbV and a large number of cofactors. It forms dimeric complexes. The cofactor is The D1/D2 heterodimer binds P680, chlorophylls that are the primary electron donor of PSII, and subsequent electron acceptors. It shares a non-heme iron and each subunit binds pheophytin, quinone, additional chlorophylls, carotenoids and lipids. D1 provides most of the ligands for the Mn4-Ca-O5 cluster of the oxygen-evolving complex (OEC). There is also a Cl(-1) ion associated with D1 and D2, which is required for oxygen evolution. The PSII complex binds additional chlorophylls, carotenoids and specific lipids.. Tyr-162 forms a radical intermediate that is referred to as redox-active TyrZ, YZ or Y-Z. Post-translationally, C-terminally processed by CtpA; processing is essential to allow assembly of the oxygen-evolving complex and thus photosynthetic growth.

It is found in the cellular thylakoid membrane. It carries out the reaction 2 a plastoquinone + 4 hnu + 2 H2O = 2 a plastoquinol + O2. Functionally, photosystem II (PSII) is a light-driven water:plastoquinone oxidoreductase that uses light energy to abstract electrons from H(2)O, generating O(2) and a proton gradient subsequently used for ATP formation. It consists of a core antenna complex that captures photons, and an electron transfer chain that converts photonic excitation into a charge separation. The D1/D2 (PsbA/PsbD) reaction center heterodimer binds P680, the primary electron donor of PSII as well as several subsequent electron acceptors. In Prochlorococcus marinus (strain SARG / CCMP1375 / SS120), this protein is Photosystem II protein D1.